The following is a 110-amino-acid chain: Protein YcgL (110 aa).

Positions 14–98 (MFCVIYRSSK…PPEDLLKQHL (85 aa)) constitute a YcgL domain. A disordered region spans residues 88-110 (PPPEDLLKQHLSSVGQNTSPADR). Polar residues predominate over residues 97 to 110 (HLSSVGQNTSPADR).

In Salmonella paratyphi A (strain ATCC 9150 / SARB42), this protein is Protein YcgL.